Consider the following 662-residue polypeptide: Neurexin-2-beta (662 aa).

The segment covering 1-10 (MPPGGSGQGG) has biased composition (gly residues). Residues 1–27 (MPPGGSGQGGCPRRPPALAGPLPPPPP) are disordered. Residues 1–46 (MPPGGSGQGGCPRRPPALAGPLPPPPPPPPLPLLLGLLLLLGAAEG) form the signal peptide. The Extracellular portion of the chain corresponds to 47–586 (ARVSSSLSTT…EVIRESSSTT (540 aa)). One can recognise a Laminin G-like domain in the interval 87–295 (TTYIFGKGGA…HLRLVGEGPS (209 aa)). The Ca(2+) site is built by Asp-139 and Val-156. N-linked (GlcNAc...) asparagine glycosylation occurs at Asn-186. Positions 238 and 240 each coordinate Ca(2+). An O-linked (Xyl...) (heparan sulfate) serine glycan is attached at Ser-350. Disordered stretches follow at residues 408–458 (ATQD…LPPT), 476–496 (LLSP…ATGA), and 530–557 (LGPG…PGFP). A helical transmembrane segment spans residues 587–607 (GMVVGIVAAAALCILILLYAM). Residues 608–662 (YKYRNRDEGSYQVDQSRNYISNSAQSNGAVVKEKAPAAPKTPSKAKKNKDKEYYV) are Cytoplasmic-facing. The disordered stretch occupies residues 629–662 (NSAQSNGAVVKEKAPAAPKTPSKAKKNKDKEYYV).

It belongs to the neurexin family. In terms of assembly, interacts (via cytoplasmic C-terminal region) with CASK. Isoform Beta 4b binds alpha-dystroglycan and neuroligins NLGN1, NLGN2 and NLGN3. Interacts with CBLN1, CBLN2 and, less avidly, with CBLN4. Interacts with CLSTN3. O-glycosylated; contains heparan sulfate. Heparan sulfate attachment is required for synapse development by mediating interactions with neuroligins. In terms of tissue distribution, brain (neuronal synapse).

The protein resides in the presynaptic cell membrane. Neuronal cell surface protein that may be involved in cell recognition and cell adhesion. The protein is Neurexin-2-beta (Nrxn2) of Rattus norvegicus (Rat).